Here is a 139-residue protein sequence, read N- to C-terminus: Putative pre-16S rRNA nuclease (139 aa).

Belongs to the YqgF nuclease family.

It localises to the cytoplasm. Its function is as follows. Could be a nuclease involved in processing of the 5'-end of pre-16S rRNA. In Streptococcus suis (strain 98HAH33), this protein is Putative pre-16S rRNA nuclease.